The sequence spans 252 residues: Endonuclease NucS (252 aa).

This sequence belongs to the NucS endonuclease family.

It localises to the cytoplasm. In terms of biological role, cleaves both 3' and 5' ssDNA extremities of branched DNA structures. The chain is Endonuclease NucS from Sulfurisphaera tokodaii (strain DSM 16993 / JCM 10545 / NBRC 100140 / 7) (Sulfolobus tokodaii).